The chain runs to 313 residues: WD repeat-containing protein 82-A (313 aa).

6 WD repeats span residues 19–58 (ENSD…PKRT), 105–144 (GHSK…CQGL), 146–184 (HLQG…KGPF), 192–231 (DRTC…VMHT), 236–276 (NNSK…KVAV), and 280–313 (KHTG…TIDD).

The protein belongs to the WD repeat SWD2 family. Component of the SET1/COMPASS complex. Component of the PNUTS-PP1 phosphatase complex.

It is found in the nucleus. Its subcellular location is the chromosome. The protein localises to the cytoplasm. In terms of biological role, regulatory component of the SET1/COMPASS complex implicated in the tethering of this complex to transcriptional start sites of active genes. Facilitates histone H3 'Lys-4' methylation (H3K4me) via recruitment of the SETD1A or SETD1B to the 'Ser-5' phosphorylated C-terminal domain (CTD) of RNA polymerase II large subunit (POLR2A). Component of the PNUTS-PP1 protein phosphatase complex, a protein phosphatase 1 (PP1) complex that promotes RNA polymerase II transcription pause-release, allowing transcription elongation. The chain is WD repeat-containing protein 82-A (wdr82-a) from Xenopus laevis (African clawed frog).